The following is a 208-amino-acid chain: Calcyphosin-like protein (208 aa).

EF-hand domains are found at residues 39–74, 75–110, 111–146, and 154–191; these read AGIK…YAVV, MEKE…PMSR, ARKE…KHHP, and SEEQ…VSAS. 10 residues coordinate Ca(2+): aspartate 52, aspartate 54, asparagine 56, threonine 58, glutamate 63, aspartate 88, aspartate 90, asparagine 92, threonine 94, and glutamate 99.

The protein localises to the cytoplasm. This is Calcyphosin-like protein (CAPSL) from Homo sapiens (Human).